We begin with the raw amino-acid sequence, 98 residues long: uncharacterized protein (98 aa).

Residues Met1 to Ala63 form a disordered region. Residues Asp14–Asp29 show a composition bias toward acidic residues. Residues Glu48–Ser57 are compositionally biased toward polar residues.

This is an uncharacterized protein from Aedes vexans (Inland floodwater mosquito).